The sequence spans 587 residues: Ankyrin repeat and SOCS box protein 14 (587 aa).

11 ANK repeats span residues 82 to 112 (IGWIPLHKAAVQLNRKILEITLSASDPSLWE), 117 to 146 (NGETPLFLAVSSCLLENATFLLLNGCNPNA), 150 to 179 (EGNSPLLAAVLRDCYDMAALLINYGADVNL), 183 to 212 (NERTALHEAAKLGREDMVKLMLVSGAHPDP), 216 to 245 (YGFTPLALAAQSGHTEIMEMLLRKGKIFCL), 248 to 277 (DSSSILLEAASGGNPDAVALLLEYGADANI), 281 to 310 (SGHLPIHVAADRGHLLALKILIPVTDLAAI), 313 to 342 (SGISPVHCAAAGAHPQCLELLIQAGFDVNF), 355 to 384 (HRKSALYFAVSNSDLSSVKLLLSAGALPNQ), 385 to 414 (DPVNCLQIALRMGNYELISLLLRHGANVNY), and 416 to 449 (CRVNPLHFPSALQYTLKDEVMLRMLLNYGYDTER). Residues 521-576 (WSEIHFILTNPRSLKHLCRLKIRKCMGRLHLRCPVFMSFLPLPNRLKAYVLYKEYD) form the SOCS box domain.

Belongs to the ankyrin SOCS box (ASB) family. As to quaternary structure, interacts with MAPRE2; this interaction promotes MAPRE2 degradation.

It participates in protein modification; protein ubiquitination. Its function is as follows. May be a substrate-recognition component of a SCF-like ECS (Elongin-Cullin-SOCS-box protein) E3 ubiquitin-protein ligase complex which mediates the ubiquitination and subsequent proteasomal degradation of target proteins. Plays a role in the inhibition of cardiomyocyte nuclear proliferation by mediating the ubiquitination and degradation of MAPRE2. This chain is Ankyrin repeat and SOCS box protein 14 (ASB14), found in Homo sapiens (Human).